Reading from the N-terminus, the 160-residue chain is MMNRVVLVGRLTKDPDLRYTPAGVAVATFTLAVNRTFTNQNGEREADFINCVVWRKPAENVANFLKKGSMAGVDGRVQTRNYEDNDGKRVFVTEVVAESVQFLEPKNNNVEGATSNNYQNKANYSNNNQTSSYRADTSQKSDSFASEGKPIDINEDDLPF.

Positions 2 to 104 (MNRVVLVGRL…VVAESVQFLE (103 aa)) constitute an SSB domain. A disordered region spans residues 107–160 (NNNVEGATSNNYQNKANYSNNNQTSSYRADTSQKSDSFASEGKPIDINEDDLPF). Positions 115–129 (SNNYQNKANYSNNNQ) are enriched in low complexity. A compositionally biased stretch (polar residues) spans 130-144 (TSSYRADTSQKSDSF). Positions 155-160 (EDDLPF) match the Important for interaction with partner proteins motif.

As to quaternary structure, homotetramer.

Functionally, plays an important role in DNA replication, recombination and repair. Binds to ssDNA and to an array of partner proteins to recruit them to their sites of action during DNA metabolism. The protein is Single-stranded DNA-binding protein 2 (ssb2) of Listeria monocytogenes serovar 1/2a (strain ATCC BAA-679 / EGD-e).